Here is a 121-residue protein sequence, read N- to C-terminus: Ig heavy chain V region MPC 11 (121 aa).

In terms of domain architecture, Ig-like spans 1–112 (EAQLQQSGAE…NSSPYFDSWG (112 aa)).

The sequence is that of Ig heavy chain V region MPC 11 from Mus musculus (Mouse).